The following is a 141-amino-acid chain: MRHKKSGRKFNRSASHRKAMLRNMVRSLLTYEHIRTTEPKAKELRSSCEKLITLALRNDLHSRRLAYKTLENHGLVKRLFDEIGPRYEGGGGGYTRIIKLAEPRKGDCAPMCIIELTKRAEAPAEEAAATTEAPAEEAQEA.

This sequence belongs to the bacterial ribosomal protein bL17 family. In terms of assembly, part of the 50S ribosomal subunit. Contacts protein L32.

This Maridesulfovibrio salexigens (strain ATCC 14822 / DSM 2638 / NCIMB 8403 / VKM B-1763) (Desulfovibrio salexigens) protein is Large ribosomal subunit protein bL17.